Reading from the N-terminus, the 316-residue chain is MQILLANPRGFCAGVDRAISIVENALAIYGAPIYVRHEVVHNRYVVDSLRERGAIFIEQISEVPDGAILIFSAHGVSQAVRNEAKSRDLTVFDATCPLVTKVHMEVARASRRGEESILIGHAGHPEVEGTMGQYSNPEGGMYLVESPDDVWKLTVKNEEKLSFMTQTTLSVDDTSDVIDALRKRFPKIVGPRKDDICYATTNRQEAVRALAEQAEVVLVVGSKNSSNSNRLAELAQRMGKRAFLIDDATDIQEEWVKEAKCVGVTAGASAPDILVQNVVARLQQLGGGEAIPLEGREENIVFEVPKELRVDIREVD.

C12 is a binding site for [4Fe-4S] cluster. The (2E)-4-hydroxy-3-methylbut-2-enyl diphosphate site is built by H41 and H74. Residues H41 and H74 each contribute to the dimethylallyl diphosphate site. Positions 41 and 74 each coordinate isopentenyl diphosphate. Residue C96 coordinates [4Fe-4S] cluster. Residue H124 coordinates (2E)-4-hydroxy-3-methylbut-2-enyl diphosphate. Residue H124 coordinates dimethylallyl diphosphate. Position 124 (H124) interacts with isopentenyl diphosphate. E126 acts as the Proton donor in catalysis. Residue T167 participates in (2E)-4-hydroxy-3-methylbut-2-enyl diphosphate binding. C197 is a binding site for [4Fe-4S] cluster. S225, S226, N227, and S269 together coordinate (2E)-4-hydroxy-3-methylbut-2-enyl diphosphate. Dimethylallyl diphosphate contacts are provided by S225, S226, N227, and S269. The isopentenyl diphosphate site is built by S225, S226, N227, and S269.

Belongs to the IspH family. As to quaternary structure, homodimer. The cofactor is [4Fe-4S] cluster.

It catalyses the reaction isopentenyl diphosphate + 2 oxidized [2Fe-2S]-[ferredoxin] + H2O = (2E)-4-hydroxy-3-methylbut-2-enyl diphosphate + 2 reduced [2Fe-2S]-[ferredoxin] + 2 H(+). The catalysed reaction is dimethylallyl diphosphate + 2 oxidized [2Fe-2S]-[ferredoxin] + H2O = (2E)-4-hydroxy-3-methylbut-2-enyl diphosphate + 2 reduced [2Fe-2S]-[ferredoxin] + 2 H(+). It participates in isoprenoid biosynthesis; dimethylallyl diphosphate biosynthesis; dimethylallyl diphosphate from (2E)-4-hydroxy-3-methylbutenyl diphosphate: step 1/1. It functions in the pathway isoprenoid biosynthesis; isopentenyl diphosphate biosynthesis via DXP pathway; isopentenyl diphosphate from 1-deoxy-D-xylulose 5-phosphate: step 6/6. In terms of biological role, catalyzes the conversion of 1-hydroxy-2-methyl-2-(E)-butenyl 4-diphosphate (HMBPP) into a mixture of isopentenyl diphosphate (IPP) and dimethylallyl diphosphate (DMAPP). Acts in the terminal step of the DOXP/MEP pathway for isoprenoid precursor biosynthesis. The chain is 4-hydroxy-3-methylbut-2-enyl diphosphate reductase from Escherichia coli (strain UTI89 / UPEC).